A 304-amino-acid polypeptide reads, in one-letter code: Polyisoprenyl-teichoic acid--peptidoglycan teichoic acid transferase TagU (304 aa).

Topologically, residues 1 to 3 (MKK) are cytoplasmic. Residues 4 to 24 (ALIAIGLILGTITVAIIGYGI) form a helical; Signal-anchor for type II membrane protein membrane-spanning segment. Over 25-304 (YLYSSIQNTA…GELKSHLELS (280 aa)) the chain is Extracellular.

The protein belongs to the LytR/CpsA/Psr (LCP) family.

Its subcellular location is the cell membrane. It functions in the pathway cell wall biogenesis. In terms of biological role, may catalyze the final step in cell wall teichoic acid biosynthesis, the transfer of the anionic cell wall polymers (APs) from their lipid-linked precursor to the cell wall peptidoglycan (PG). This Halalkalibacterium halodurans (strain ATCC BAA-125 / DSM 18197 / FERM 7344 / JCM 9153 / C-125) (Bacillus halodurans) protein is Polyisoprenyl-teichoic acid--peptidoglycan teichoic acid transferase TagU.